The chain runs to 328 residues: 3-dehydroquinate synthase (328 aa).

The protein belongs to the archaeal-type DHQ synthase family.

It carries out the reaction 2-amino-2,3,7-trideoxy-D-lyxo-hept-6-ulosonate + NAD(+) + H2O = 3-dehydroquinate + NH4(+) + NADH + H(+). In terms of biological role, catalyzes the oxidative deamination and cyclization of 2-amino-3,7-dideoxy-D-threo-hept-6-ulosonic acid (ADH) to yield 3-dehydroquinate (DHQ), which is fed into the canonical shikimic pathway of aromatic amino acid biosynthesis. The sequence is that of 3-dehydroquinate synthase from Methanoculleus marisnigri (strain ATCC 35101 / DSM 1498 / JR1).